Here is a 118-residue protein sequence, read N- to C-terminus: T cell receptor gamma variable 3 (118 aa).

The signal sequence occupies residues 1–17 (MRWALLVLLAFLSPASQ). The region spanning 18–118 (KSSNLEGRTK…GVYYCATWDR (101 aa)) is the Ig-like domain. Cysteines 41 and 113 form a disulfide. Asn106 carries N-linked (GlcNAc...) asparagine glycosylation.

In terms of assembly, gamma-delta TR is a heterodimer composed of a gamma and delta chain; disulfide-linked. The gamma-delta TR is associated with the transmembrane signaling CD3 coreceptor proteins following the stoichiometry: a single gamma-delta TR heterodimer associates with one CD3D-CD3E heterodimer, one CD3G-CD3E heterodimer and one CD247 homodimer forming a stable octameric structure. Upon activation, gamma-delta TR complex associates with FCER1G to initiate intracellular signaling.

The protein resides in the cell membrane. Functionally, v region of the variable domain of T cell receptor (TR) gamma chain that participates in the antigen recognition. Gamma-delta TRs recognize a variety of self and foreign non-peptide antigens frequently expressed at the epithelial boundaries between the host and external environment, including endogenous lipids presented by MH-like protein CD1D and phosphoantigens presented by butyrophilin-like molecule BTN3A1. Upon antigen recognition induces rapid, innate-like immune responses involved in pathogen clearance and tissue repair. Binding of gamma-delta TR complex to antigen triggers phosphorylation of immunoreceptor tyrosine-based activation motifs (ITAMs) in the CD3 chains by the LCK and FYN kinases, allowing the recruitment, phosphorylation, and activation of ZAP70 that facilitates phosphorylation of the scaffolding proteins LCP2 and LAT. This lead to the formation of a supramolecular signalosome that recruits the phospholipase PLCG1, resulting in calcium mobilization and ERK activation, ultimately leading to T cell expansion and differentiation into effector cells. Gamma-delta TRs are produced through somatic rearrangement of a limited repertoire of variable (V), diversity (D), and joining (J) genes. The potential diversity of gamma-delta TRs is conferred by the unique ability to rearrange (D) genes in tandem and to utilize all three reading frames. The combinatorial diversity is considerably increased by the sequence exonuclease trimming and random nucleotide (N) region additions which occur during the V-(D)-J rearrangements. This Homo sapiens (Human) protein is T cell receptor gamma variable 3.